The following is a 296-amino-acid chain: N-acetylmuramic acid 6-phosphate etherase (296 aa).

Residues 54 to 217 enclose the SIS domain; that stretch reads VIASFQQGGR…STTAMVGIGK (164 aa). Residue glutamate 82 is the Proton donor of the active site. The active site involves glutamate 113.

Belongs to the GCKR-like family. MurNAc-6-P etherase subfamily. As to quaternary structure, homodimer.

The enzyme catalyses N-acetyl-D-muramate 6-phosphate + H2O = N-acetyl-D-glucosamine 6-phosphate + (R)-lactate. The protein operates within amino-sugar metabolism; N-acetylmuramate degradation. Functionally, specifically catalyzes the cleavage of the D-lactyl ether substituent of MurNAc 6-phosphate, producing GlcNAc 6-phosphate and D-lactate. The protein is N-acetylmuramic acid 6-phosphate etherase of Shouchella clausii (strain KSM-K16) (Alkalihalobacillus clausii).